The sequence spans 299 residues: Acetaldehyde dehydrogenase 1 (299 aa).

Cysteine 130 (acyl-thioester intermediate) is an active-site residue. NAD(+) contacts are provided by residues 161-169 (SVGPGTRKN) and asparagine 272.

This sequence belongs to the acetaldehyde dehydrogenase family.

It carries out the reaction acetaldehyde + NAD(+) + CoA = acetyl-CoA + NADH + H(+). This Burkholderia cenocepacia (strain ATCC BAA-245 / DSM 16553 / LMG 16656 / NCTC 13227 / J2315 / CF5610) (Burkholderia cepacia (strain J2315)) protein is Acetaldehyde dehydrogenase 1 (mhpF).